The sequence spans 183 residues: Segregation and condensation protein B (183 aa).

It belongs to the ScpB family. As to quaternary structure, homodimer. Homodimerization may be required to stabilize the binding of ScpA to the Smc head domains. Component of a cohesin-like complex composed of ScpA, ScpB and the Smc homodimer, in which ScpA and ScpB bind to the head domain of Smc. The presence of the three proteins is required for the association of the complex with DNA.

The protein resides in the cytoplasm. Its function is as follows. Participates in chromosomal partition during cell division. May act via the formation of a condensin-like complex containing Smc and ScpA that pull DNA away from mid-cell into both cell halves. The protein is Segregation and condensation protein B of Streptococcus pyogenes serotype M12 (strain MGAS2096).